The sequence spans 421 residues: Gamma-glutamyl phosphate reductase (421 aa).

Belongs to the gamma-glutamyl phosphate reductase family.

It localises to the cytoplasm. It carries out the reaction L-glutamate 5-semialdehyde + phosphate + NADP(+) = L-glutamyl 5-phosphate + NADPH + H(+). Its pathway is amino-acid biosynthesis; L-proline biosynthesis; L-glutamate 5-semialdehyde from L-glutamate: step 2/2. In terms of biological role, catalyzes the NADPH-dependent reduction of L-glutamate 5-phosphate into L-glutamate 5-semialdehyde and phosphate. The product spontaneously undergoes cyclization to form 1-pyrroline-5-carboxylate. In Pseudomonas aeruginosa (strain ATCC 15692 / DSM 22644 / CIP 104116 / JCM 14847 / LMG 12228 / 1C / PRS 101 / PAO1), this protein is Gamma-glutamyl phosphate reductase.